We begin with the raw amino-acid sequence, 198 residues long: MALGARRVAGVDEVGRGPLAGPVTAAAVVLDPANIPEGLNDSKQLSVKRRNLLGDALASSADISVGHASVEEIEQHNILRASHMAMLRALAGLRLRPDFVLIDGAMVPQGLNLRAQPVVKGDTRCLSISAASIIAKIARDKIMVDLAQQHPGYGWETNMGYGSKSHISALRNLGVTPHHRRTFKPVHHMLYQDKNVKP.

An RNase H type-2 domain is found at 6–195 (RRVAGVDEVG…VHHMLYQDKN (190 aa)). A divalent metal cation is bound by residues D12, E13, and D103.

This sequence belongs to the RNase HII family. Mn(2+) is required as a cofactor. Requires Mg(2+) as cofactor.

It is found in the cytoplasm. It catalyses the reaction Endonucleolytic cleavage to 5'-phosphomonoester.. Functionally, endonuclease that specifically degrades the RNA of RNA-DNA hybrids. The polypeptide is Ribonuclease HII (Roseobacter denitrificans (strain ATCC 33942 / OCh 114) (Erythrobacter sp. (strain OCh 114))).